Consider the following 122-residue polypeptide: Large ribosomal subunit protein uL14 (122 aa).

Belongs to the universal ribosomal protein uL14 family. As to quaternary structure, part of the 50S ribosomal subunit. Forms a cluster with proteins L3 and L19. In the 70S ribosome, L14 and L19 interact and together make contacts with the 16S rRNA in bridges B5 and B8.

Binds to 23S rRNA. Forms part of two intersubunit bridges in the 70S ribosome. The chain is Large ribosomal subunit protein uL14 from Geobacter sulfurreducens (strain ATCC 51573 / DSM 12127 / PCA).